Here is a 471-residue protein sequence, read N- to C-terminus: Glutamate--tRNA ligase (471 aa).

A 'HIGH' region motif is present at residues P9–G19. Residues C98, C100, C125, and H127 each coordinate Zn(2+). The 'KMSKS' region signature appears at K237–R241. K240 provides a ligand contact to ATP.

This sequence belongs to the class-I aminoacyl-tRNA synthetase family. Glutamate--tRNA ligase type 1 subfamily. Monomer. Requires Zn(2+) as cofactor.

The protein resides in the cytoplasm. The catalysed reaction is tRNA(Glu) + L-glutamate + ATP = L-glutamyl-tRNA(Glu) + AMP + diphosphate. Its function is as follows. Catalyzes the attachment of glutamate to tRNA(Glu) in a two-step reaction: glutamate is first activated by ATP to form Glu-AMP and then transferred to the acceptor end of tRNA(Glu). The polypeptide is Glutamate--tRNA ligase (Salmonella paratyphi A (strain ATCC 9150 / SARB42)).